The sequence spans 292 residues: 4-hydroxy-tetrahydrodipicolinate synthase (292 aa).

Threonine 45 contacts pyruvate. Residue tyrosine 134 is the Proton donor/acceptor of the active site. Lysine 162 acts as the Schiff-base intermediate with substrate in catalysis. Valine 204 contributes to the pyruvate binding site.

Belongs to the DapA family. In terms of assembly, homotetramer; dimer of dimers.

It localises to the cytoplasm. The enzyme catalyses L-aspartate 4-semialdehyde + pyruvate = (2S,4S)-4-hydroxy-2,3,4,5-tetrahydrodipicolinate + H2O + H(+). The protein operates within amino-acid biosynthesis; L-lysine biosynthesis via DAP pathway; (S)-tetrahydrodipicolinate from L-aspartate: step 3/4. Its function is as follows. Catalyzes the condensation of (S)-aspartate-beta-semialdehyde [(S)-ASA] and pyruvate to 4-hydroxy-tetrahydrodipicolinate (HTPA). The polypeptide is 4-hydroxy-tetrahydrodipicolinate synthase (Marinobacter nauticus (strain ATCC 700491 / DSM 11845 / VT8) (Marinobacter aquaeolei)).